The primary structure comprises 834 residues: MNTYFISFITIIIFANGINGTSVDTSNKLLLQKANDFNLSQNLSSSRTRRTIANSFRIVGIRLEDETVETKNGIPTVLVDKEQQFRVFGSGLEENTAITFTNEKNDYGGPCLKPATDLFTPIEVSSNGFSALYSVKFPSFINEFFICAKTAEKTTNHSKAATTTPLEHQGNSDFLKIKTFEPLIPVWLAIIIIVTCLGFSALFSGLNLGLMSMDRTELKILRNTGTEKEKKYASKIAPVRDQGNYLLCSILLGNVLVNSTFTILLDGLTSGLFAVIFSTLAIVLFGEITPQAVCSRHGLAIGAKTILVTKTVMAITAPLSYPVSRILDKLLGEEIGNVYNRERLKELVRVTNDVNDLDKNEVNIISGALELRKKTVADVMTHINDAFMLSLDALLDFETVSEIMNSGYSRIPVYDGDRKNIVTLLYIKDLAFVDTDDNTPLKTLCEFYQNPVHFVFEDYTLDIMFNQFKEGTIGHIAFVHRVNNEGDGDPFYETVGLVTLEDVIEELIQAEIVDETDVFVDNRTKTRRNRYKKADFSAFAERREVQTVRISPQLTLATFQYLSTAVDAFKKDVISELILRRLLNQDVFHNIKTKGKSKDDPSLYIFTQGKAVDFFVLILEGRVEVTIGKEALMFESGPFTYFGTQALVPNVVIDSPTQMGSLQSLNMDSKIRQSFVPDYSVRAISDVIYITIKRVLYLTAKKATLLEKSRKSGTFSSETFDDEVERLLHSITENEKPSCFAQNQSTRRLSNRSINSSPTNMNRSPDFVYNSVDEAIQDDTKLKNIKHADNVTTSISLVAAELEDLHSGEQDTTAASMPLLPKLDDKFESKQSKP.

Residues 1-20 form the signal peptide; sequence MNTYFISFITIIIFANGING. Residues 21–182 lie on the Extracellular side of the membrane; sequence TSVDTSNKLL…DFLKIKTFEP (162 aa). 3 N-linked (GlcNAc...) asparagine glycosylation sites follow: N38, N42, and N156. The region spanning 182 to 361 is the CNNM transmembrane domain; that stretch reads PLIPVWLAII…NDVNDLDKNE (180 aa). The chain crosses the membrane as a helical span at residues 183–203; it reads LIPVWLAIIIIVTCLGFSALF. At 204 to 244 the chain is on the cytoplasmic side; that stretch reads SGLNLGLMSMDRTELKILRNTGTEKEKKYASKIAPVRDQGN. The helical transmembrane segment at 245–265 threads the bilayer; it reads YLLCSILLGNVLVNSTFTILL. The Extracellular portion of the chain corresponds to 266–267; sequence DG. Residues 268-288 form a helical membrane-spanning segment; that stretch reads LTSGLFAVIFSTLAIVLFGEI. Topologically, residues 289–298 are cytoplasmic; it reads TPQAVCSRHG. The helical transmembrane segment at 299–319 threads the bilayer; sequence LAIGAKTILVTKTVMAITAPL. At 320 to 834 the chain is on the extracellular side; that stretch reads SYPVSRILDK…DKFESKQSKP (515 aa). 2 consecutive CBS domains span residues 380-441 and 448-515; these read MTHI…NTPL and YQNP…IVDE. N522 is a glycosylation site (N-linked (GlcNAc...) asparagine). Residue 604–656 coordinates a nucleoside 3',5'-cyclic phosphate; sequence YIFTQGKAVDFFVLILEGRVEVTIGKEALMFESGPFTYFGTQALVPNVVIDSP. Positions 739–765 are disordered; sequence CFAQNQSTRRLSNRSINSSPTNMNRSP. The span at 740–763 shows a compositional bias: polar residues; sequence FAQNQSTRRLSNRSINSSPTNMNR. N-linked (GlcNAc...) asparagine glycosylation is found at N743, N751, and N790. The disordered stretch occupies residues 807–834; it reads SGEQDTTAASMPLLPKLDDKFESKQSKP. Residues 822-834 show a composition bias toward basic and acidic residues; the sequence is KLDDKFESKQSKP.

The protein belongs to the ACDP family. In terms of assembly, interacts with PRL-1, possibly at the plasma membrane.

The protein resides in the cell membrane. Functionally, probable metal transporter. Acts downstream of PRL-1 and protects the nervous system against olfactory carbon dioxide stimulation. The polypeptide is Unextended protein (Drosophila melanogaster (Fruit fly)).